We begin with the raw amino-acid sequence, 509 residues long: Proton-gated ion channel subunit pbo-5 (509 aa).

Residues methionine 1–alanine 21 form the signal peptide. At threonine 22–tyrosine 275 the chain is on the extracellular side. An intrachain disulfide couples cysteine 193 to cysteine 207. A run of 3 helical transmembrane segments spans residues methionine 276 to alanine 296, leucine 310 to proline 330, and valine 336 to threonine 356. Residues threonine 357–aspartate 487 lie on the Cytoplasmic side of the membrane. Residues isoleucine 488–leucine 508 traverse the membrane as a helical segment.

It belongs to the ligand-gated ion channel (TC 1.A.9) family. Acetylcholine receptor (TC 1.A.9.1) subfamily. As to quaternary structure, the functional channel is a heterooligomer of pbo-5 and pbo-6. May self-associate to form homooligomers with negligible ion channel activity. As to expression, expressed in the posterior body muscles. Also detected in the RIFL, RIFR and RIS head neurons.

It localises to the membrane. Its function is as follows. Forms a proton-gated ion channel with pbo-6 that is activated by acidification of the posterior coelomic space, leading to posterior body wall muscle contraction (pBoc) during the defecation cycle. Probably by regulating the defecation motor program, required for fatty acid uptake by intestinal cells. Does not bind neurotransmitters such as acetylcholine, gamma-aminobutyric acid, glycine, serotonin, glutamate or choline. The sequence is that of Proton-gated ion channel subunit pbo-5 from Caenorhabditis elegans.